Here is a 553-residue protein sequence, read N- to C-terminus: ATP synthase subunit alpha (553 aa).

173–180 (GDRQTGKT) serves as a coordination point for ATP. Residues 527 to 553 (EALDPSAVEREEIAVHHRKPSDETAGH) form a disordered region. Basic and acidic residues predominate over residues 533–553 (AVEREEIAVHHRKPSDETAGH).

This sequence belongs to the ATPase alpha/beta chains family. As to quaternary structure, F-type ATPases have 2 components, CF(1) - the catalytic core - and CF(0) - the membrane proton channel. CF(1) has five subunits: alpha(3), beta(3), gamma(1), delta(1), epsilon(1). CF(0) has three main subunits: a(1), b(2) and c(9-12). The alpha and beta chains form an alternating ring which encloses part of the gamma chain. CF(1) is attached to CF(0) by a central stalk formed by the gamma and epsilon chains, while a peripheral stalk is formed by the delta and b chains.

Its subcellular location is the cell membrane. The catalysed reaction is ATP + H2O + 4 H(+)(in) = ADP + phosphate + 5 H(+)(out). Its function is as follows. Produces ATP from ADP in the presence of a proton gradient across the membrane. The alpha chain is a regulatory subunit. This Parafrankia sp. (strain EAN1pec) protein is ATP synthase subunit alpha.